A 442-amino-acid chain; its full sequence is Zuotin (442 aa).

The disordered stretch occupies residues 49 to 84 (RQRHGRTFSEDERLEVKNKVQEEVKEESEDEEEDPA). Position 55 is a phosphothreonine (Thr-55). Basic and acidic residues predominate over residues 55–71 (TFSEDERLEVKNKVQEE). Phosphoserine is present on residues Ser-57 and Ser-76. Residues 72–83 (VKEESEDEEEDP) show a composition bias toward acidic residues. A J domain is found at 97–167 (DHYAVLGLSK…VRRRQFDSVD (71 aa)). 2 disordered regions span residues 242–270 (DGES…DNAR) and 306–331 (GARE…EAAA). Positions 316–330 (KKKEEEERRAAEEAA) are enriched in basic and acidic residues.

In terms of assembly, RAC is a heterodimer of the Hsp70/DnaK-type chaperone ssz1 and the Hsp40/DnaJ-type chaperone zuo1. RAC associates with ribosomes via zuo1.

The protein resides in the cytoplasm. Component of the ribosome-associated complex (RAC), a heterodimeric chaperone complex involved in regulation of accurate translation termination and in folding or maintaining nascent polypeptides in a folding-competent state. RAC stimulates the ATPase activity of the ribosome-associated pool of Hsp70-type chaperones SSB1/SSB2 that bind to the nascent polypeptide chain. In Schizosaccharomyces pombe (strain 972 / ATCC 24843) (Fission yeast), this protein is Zuotin (zuo1).